A 217-amino-acid chain; its full sequence is GTPase IMAP family member GIMD1 (217 aa).

One can recognise an AIG1-type G domain in the interval 6–217 (KMIINLAVFG…ENHFQVLSLA (212 aa)). GTP contacts are provided by residues 15–23 (GRTQSGKSS), S36, and 148–150 (HAE).

The protein belongs to the TRAFAC class TrmE-Era-EngA-EngB-Septin-like GTPase superfamily. AIG1/Toc34/Toc159-like paraseptin GTPase family. IAN subfamily.

This chain is GTPase IMAP family member GIMD1 (Gimd1), found in Mus musculus (Mouse).